We begin with the raw amino-acid sequence, 231 residues long: 7-cyano-7-deazaguanine synthase (231 aa).

8–18 serves as a coordination point for ATP; it reads FSGGQDSTTCL. Zn(2+) is bound by residues C188, C197, C200, and C203.

The protein belongs to the QueC family. Zn(2+) serves as cofactor.

It catalyses the reaction 7-carboxy-7-deazaguanine + NH4(+) + ATP = 7-cyano-7-deazaguanine + ADP + phosphate + H2O + H(+). The protein operates within purine metabolism; 7-cyano-7-deazaguanine biosynthesis. In terms of biological role, catalyzes the ATP-dependent conversion of 7-carboxy-7-deazaguanine (CDG) to 7-cyano-7-deazaguanine (preQ(0)). The protein is 7-cyano-7-deazaguanine synthase of Salmonella newport (strain SL254).